Consider the following 653-residue polypeptide: J protein JJJ2 (653 aa).

Residues 14-78 (TLYSVLNLKY…KEKMKYDSKL (65 aa)) enclose the J domain. Disordered stretches follow at residues 85 to 308 (DYSP…SSTE) and 490 to 512 (VSPKPRSVPSKTTPGSSHAEENL). Polar residues-rich tracts occupy residues 161 to 171 (NAKSYQNSKKS) and 187 to 200 (ATSFSNENRNSSSV). Over residues 213–241 (SGSAVGSESRISSSGSESSSNVNSATGSS) the composition is skewed to low complexity. A compositionally biased stretch (polar residues) spans 298–308 (PVKTTPNSSTE).

It is found in the cytoplasm. The protein resides in the nucleus. The chain is J protein JJJ2 (JJJ2) from Kluyveromyces lactis (strain ATCC 8585 / CBS 2359 / DSM 70799 / NBRC 1267 / NRRL Y-1140 / WM37) (Yeast).